A 936-amino-acid polypeptide reads, in one-letter code: Phosphoenolpyruvate carboxylase (936 aa).

The tract at residues 1–20 (MSSLNLSAGPEPVSERPDDA) is disordered. Active-site residues include His164 and Lys598.

It belongs to the PEPCase type 1 family. It depends on Mg(2+) as a cofactor.

It catalyses the reaction oxaloacetate + phosphate = phosphoenolpyruvate + hydrogencarbonate. In terms of biological role, forms oxaloacetate, a four-carbon dicarboxylic acid source for the tricarboxylic acid cycle. The polypeptide is Phosphoenolpyruvate carboxylase (ppc) (Rhodopseudomonas palustris (strain ATCC BAA-98 / CGA009)).